A 592-amino-acid chain; its full sequence is Aspartate--tRNA ligase (592 aa).

Residue glutamate 180 coordinates L-aspartate. An aspartate region spans residues glutamine 204–lysine 207. L-aspartate is bound at residue arginine 226. ATP contacts are provided by residues arginine 226–glutamate 228 and glutamine 235. L-aspartate is bound at residue histidine 455. Glutamate 489 contacts ATP. Arginine 496 contacts L-aspartate. Glycine 541 to arginine 544 contributes to the ATP binding site.

Belongs to the class-II aminoacyl-tRNA synthetase family. Type 1 subfamily. In terms of assembly, homodimer.

The protein resides in the cytoplasm. It carries out the reaction tRNA(Asp) + L-aspartate + ATP = L-aspartyl-tRNA(Asp) + AMP + diphosphate. Its function is as follows. Catalyzes the attachment of L-aspartate to tRNA(Asp) in a two-step reaction: L-aspartate is first activated by ATP to form Asp-AMP and then transferred to the acceptor end of tRNA(Asp). This chain is Aspartate--tRNA ligase, found in Clostridium tetani (strain Massachusetts / E88).